A 384-amino-acid polypeptide reads, in one-letter code: Dual-specificity RNA methyltransferase RlmN (384 aa).

Glutamate 93 acts as the Proton acceptor in catalysis. Positions 99 to 339 constitute a Radical SAM core domain; it reads EETRGTLCVS…TTIRKTRGDD (241 aa). Cysteines 106 and 344 form a disulfide. 3 residues coordinate [4Fe-4S] cluster: cysteine 113, cysteine 117, and cysteine 120. S-adenosyl-L-methionine-binding positions include 170 to 171, serine 202, 224 to 226, and asparagine 301; these read GE and SLH. Residue cysteine 344 is the S-methylcysteine intermediate of the active site.

Belongs to the radical SAM superfamily. RlmN family. [4Fe-4S] cluster is required as a cofactor.

It localises to the cytoplasm. It catalyses the reaction adenosine(2503) in 23S rRNA + 2 reduced [2Fe-2S]-[ferredoxin] + 2 S-adenosyl-L-methionine = 2-methyladenosine(2503) in 23S rRNA + 5'-deoxyadenosine + L-methionine + 2 oxidized [2Fe-2S]-[ferredoxin] + S-adenosyl-L-homocysteine. The enzyme catalyses adenosine(37) in tRNA + 2 reduced [2Fe-2S]-[ferredoxin] + 2 S-adenosyl-L-methionine = 2-methyladenosine(37) in tRNA + 5'-deoxyadenosine + L-methionine + 2 oxidized [2Fe-2S]-[ferredoxin] + S-adenosyl-L-homocysteine. Specifically methylates position 2 of adenine 2503 in 23S rRNA and position 2 of adenine 37 in tRNAs. m2A2503 modification seems to play a crucial role in the proofreading step occurring at the peptidyl transferase center and thus would serve to optimize ribosomal fidelity. This is Dual-specificity RNA methyltransferase RlmN from Cupriavidus necator (strain ATCC 17699 / DSM 428 / KCTC 22496 / NCIMB 10442 / H16 / Stanier 337) (Ralstonia eutropha).